Consider the following 485-residue polypeptide: Membrane-bound lytic murein transglycosylase F (485 aa).

The N-terminal stretch at 1 to 29 is a signal peptide; that stretch reads MFAHTALRQRCAKWLFATGLFLLLGACVE. The tract at residues 30–267 is non-LT domain; sequence KPSTLERVKE…RLKDRYYGHV (238 aa). Residues 268–485 are LT domain; sequence DVLGYVGAYT…DKPAEQSPPM (218 aa). Glutamate 314 is a catalytic residue. The tract at residues 465 to 485 is disordered; sequence EGNLHVPGVNKDKPAEQSPPM.

This sequence in the N-terminal section; belongs to the bacterial solute-binding protein 3 family. It in the C-terminal section; belongs to the transglycosylase Slt family.

The protein localises to the cell outer membrane. The catalysed reaction is Exolytic cleavage of the (1-&gt;4)-beta-glycosidic linkage between N-acetylmuramic acid (MurNAc) and N-acetylglucosamine (GlcNAc) residues in peptidoglycan, from either the reducing or the non-reducing ends of the peptidoglycan chains, with concomitant formation of a 1,6-anhydrobond in the MurNAc residue.. Its function is as follows. Murein-degrading enzyme that degrades murein glycan strands and insoluble, high-molecular weight murein sacculi, with the concomitant formation of a 1,6-anhydromuramoyl product. Lytic transglycosylases (LTs) play an integral role in the metabolism of the peptidoglycan (PG) sacculus. Their lytic action creates space within the PG sacculus to allow for its expansion as well as for the insertion of various structures such as secretion systems and flagella. This is Membrane-bound lytic murein transglycosylase F from Pseudomonas putida (strain W619).